Here is a 710-residue protein sequence, read N- to C-terminus: Probable GTP diphosphokinase RSH2, chloroplastic (710 aa).

A chloroplast-targeting transit peptide spans 1–63 (MVVATTIALY…SSLFSSASVK (63 aa)). Positions 233-337 (YLQHCVETAM…IKLADRLHNM (105 aa)) constitute an HD domain.

The protein belongs to the RelA/SpoT family.

The protein resides in the plastid. Its subcellular location is the chloroplast. It carries out the reaction GTP + ATP = guanosine 3'-diphosphate 5'-triphosphate + AMP. Functionally, probable ppGpp (guanosine 3'-diphosphate 5'-diphosphate) synthetase that may be involved in a rapid plant ppGpp-mediated response to pathogens and other stresses. The sequence is that of Probable GTP diphosphokinase RSH2, chloroplastic (RSH2) from Arabidopsis thaliana (Mouse-ear cress).